A 266-amino-acid chain; its full sequence is Putative [LysW]-aminoadipate/[LysW]-glutamate kinase (266 aa).

Residues 36–37, arginine 63, and asparagine 168 each bind substrate; that span reads GG.

It belongs to the acetylglutamate kinase family. LysZ subfamily.

It localises to the cytoplasm. It carries out the reaction [amino-group carrier protein]-C-terminal-N-(1,4-dicarboxybutan-1-yl)-L-glutamine + ATP = [amino-group carrier protein]-C-terminal-N-(1-carboxy-5-phosphooxy-5-oxopentan-1-yl)-L-glutamine + ADP. The catalysed reaction is [amino-group carrier protein]-C-terminal-gamma-(L-glutamyl)-L-glutamate + ATP = [amino-group carrier protein]-C-terminal-gamma-(5-phospho-L-glutamyl)-L-glutamate + ADP. Its pathway is amino-acid biosynthesis; L-lysine biosynthesis via AAA pathway; L-lysine from L-alpha-aminoadipate (Thermus route): step 2/5. It participates in amino-acid biosynthesis; L-arginine biosynthesis. In terms of biological role, involved in both the arginine and lysine biosynthetic pathways. Phosphorylates the LysW-bound precursors glutamate (for arginine biosynthesis), respectively alpha-aminoadipate (for lysine biosynthesis). In Cenarchaeum symbiosum (strain A), this protein is Putative [LysW]-aminoadipate/[LysW]-glutamate kinase.